A 223-amino-acid chain; its full sequence is MQKQRFCLDTTAITDSDVRKSLGVSNISESAEKIMDIVAQARVQLDISCHIPYNTVYKELIGFLIREECAPETLIKVDTWLVKKTPNRYEIKIPAEIFHEYIKDLRERINKGMRISENAMYETALEAYILSKPDEKDKEDVLNEVLSKTVNSFRDKYRNTLRGGTLDSAPDLDVLLLAKELDAAVVANDEGIEKWAQRLGLRFVNARDFPFILQEYLDLWDKK.

This sequence belongs to the HARP family.

It carries out the reaction Endonucleolytic cleavage of RNA, removing 5'-extranucleotides from tRNA precursor.. Its function is as follows. RNA-free RNase P that catalyzes the removal of the 5'-leader sequence from pre-tRNA to produce the mature 5'-terminus. This chain is RNA-free ribonuclease P, found in Methanococcus maripaludis (strain C6 / ATCC BAA-1332).